Here is a 167-residue protein sequence, read N- to C-terminus: Urease accessory protein UreE (167 aa).

This sequence belongs to the UreE family.

It is found in the cytoplasm. Functionally, involved in urease metallocenter assembly. Binds nickel. Probably functions as a nickel donor during metallocenter assembly. The polypeptide is Urease accessory protein UreE (Pseudomonas aeruginosa (strain UCBPP-PA14)).